Reading from the N-terminus, the 459-residue chain is Cysteine--tRNA ligase (459 aa).

A Zn(2+)-binding site is contributed by C28. The 'HIGH' region signature appears at 30–40; that stretch reads VTVYDLCHIGH. Residues C209, H234, and E238 each coordinate Zn(2+). The short motif at 266–270 is the 'KMSKS' region element; sequence KMSKS. K269 is a binding site for ATP.

It belongs to the class-I aminoacyl-tRNA synthetase family. In terms of assembly, monomer. It depends on Zn(2+) as a cofactor.

It localises to the cytoplasm. It catalyses the reaction tRNA(Cys) + L-cysteine + ATP = L-cysteinyl-tRNA(Cys) + AMP + diphosphate. This is Cysteine--tRNA ligase from Haemophilus influenzae (strain PittGG).